The sequence spans 459 residues: Cysteine--tRNA ligase (459 aa).

Position 28 (C28) interacts with Zn(2+). The 'HIGH' region motif lies at 30 to 40 (VTIYDLCHIGH). Positions 209, 234, and 238 each coordinate Zn(2+). The 'KMSKS' region signature appears at 266 to 270 (KMSKS). K269 lines the ATP pocket.

The protein belongs to the class-I aminoacyl-tRNA synthetase family. In terms of assembly, monomer. Zn(2+) is required as a cofactor.

It is found in the cytoplasm. It catalyses the reaction tRNA(Cys) + L-cysteine + ATP = L-cysteinyl-tRNA(Cys) + AMP + diphosphate. The polypeptide is Cysteine--tRNA ligase (Shewanella piezotolerans (strain WP3 / JCM 13877)).